The chain runs to 83 residues: Beta-defensin 119 (83 aa).

A signal peptide spans 1–20; sequence MKFLFLFLAILLAMEPVVSG. Cystine bridges form between Cys27–Cys54, Cys34–Cys48, and Cys38–Cys55.

It belongs to the beta-defensin family.

It localises to the secreted. Functionally, has antibacterial activity. The chain is Beta-defensin 119 (DEFB119) from Bos taurus (Bovine).